The following is an 89-amino-acid chain: Small ribosomal subunit protein uS15 (89 aa).

The protein belongs to the universal ribosomal protein uS15 family. As to quaternary structure, part of the 30S ribosomal subunit. Forms a bridge to the 50S subunit in the 70S ribosome, contacting the 23S rRNA.

Its function is as follows. One of the primary rRNA binding proteins, it binds directly to 16S rRNA where it helps nucleate assembly of the platform of the 30S subunit by binding and bridging several RNA helices of the 16S rRNA. Functionally, forms an intersubunit bridge (bridge B4) with the 23S rRNA of the 50S subunit in the ribosome. This is Small ribosomal subunit protein uS15 from Elusimicrobium minutum (strain Pei191).